The sequence spans 516 residues: uncharacterized protein (516 aa).

PFTB repeat units lie at residues 45–86 (RQDA…QRAD) and 401–443 (DERA…DGSE).

This is an uncharacterized protein from Bradyrhizobium diazoefficiens (strain JCM 10833 / BCRC 13528 / IAM 13628 / NBRC 14792 / USDA 110).